We begin with the raw amino-acid sequence, 311 residues long: Malate dehydrogenase (311 aa).

Residues G7–G13 and D34 contribute to the NAD(+) site. 2 residues coordinate substrate: R81 and R87. NAD(+)-binding positions include N94 and I117 to N119. 2 residues coordinate substrate: N119 and R153. Residue H177 is the Proton acceptor of the active site. M227 provides a ligand contact to NAD(+).

This sequence belongs to the LDH/MDH superfamily. MDH type 1 family. Homodimer.

The enzyme catalyses (S)-malate + NAD(+) = oxaloacetate + NADH + H(+). Catalyzes the reversible oxidation of malate to oxaloacetate. This Haemophilus influenzae (strain ATCC 51907 / DSM 11121 / KW20 / Rd) protein is Malate dehydrogenase (mdh).